A 354-amino-acid polypeptide reads, in one-letter code: Uroporphyrinogen decarboxylase (354 aa).

Residues 27 to 31 (RQAGR), D77, Y154, T209, and H327 contribute to the substrate site.

It belongs to the uroporphyrinogen decarboxylase family. Homodimer.

The protein localises to the cytoplasm. The catalysed reaction is uroporphyrinogen III + 4 H(+) = coproporphyrinogen III + 4 CO2. The protein operates within porphyrin-containing compound metabolism; protoporphyrin-IX biosynthesis; coproporphyrinogen-III from 5-aminolevulinate: step 4/4. Functionally, catalyzes the decarboxylation of four acetate groups of uroporphyrinogen-III to yield coproporphyrinogen-III. The chain is Uroporphyrinogen decarboxylase from Salmonella newport (strain SL254).